The chain runs to 492 residues: Katanin p60 ATPase-containing subunit A1 (492 aa).

The segment at 80–186 (STPPKASQQE…ESEPKKFDST (107 aa)) is disordered. Residues 145 to 171 (PNDKGKAVRGREKKDQQNKGKEEKSKS) are compositionally biased toward basic and acidic residues. Residue 250–257 (GPPGTGKT) participates in ATP binding.

The protein belongs to the AAA ATPase family. Katanin p60 subunit A1 subfamily. As to quaternary structure, can homooligomerize into hexameric rings, which may be promoted by interaction with microtubules. Interacts with KATNB1, which may serve as a targeting subunit.

The protein localises to the cytoplasm. It is found in the cytoskeleton. Its subcellular location is the microtubule organizing center. It localises to the centrosome. The protein resides in the spindle pole. The protein localises to the spindle. The catalysed reaction is n ATP + n H2O + a microtubule = n ADP + n phosphate + (n+1) alpha/beta tubulin heterodimers.. With respect to regulation, ATPase activity is stimulated by microtubules, which promote homooligomerization. ATP-dependent microtubule severing is stimulated by interaction with KATNB1. In terms of biological role, catalytic subunit of a complex which severs microtubules in an ATP-dependent manner. Microtubule severing may promote rapid reorganization of cellular microtubule arrays and the release of microtubules from the centrosome following nucleation. This Gallus gallus (Chicken) protein is Katanin p60 ATPase-containing subunit A1.